Reading from the N-terminus, the 735-residue chain is Wall-associated receptor kinase 1 (735 aa).

The first 24 residues, 1–24 (MKVQEGLFLVAIFFSLACTQLVKG), serve as a signal peptide directing secretion. Topologically, residues 25-331 (QHQPGENCQN…TTTMSCKRKE (307 aa)) are extracellular. N-linked (GlcNAc...) asparagine glycosylation is found at asparagine 38, asparagine 56, asparagine 80, asparagine 90, asparagine 113, asparagine 140, asparagine 209, asparagine 235, and asparagine 250. The segment at 67–254 (RPHVLSDIEV…SICGGNSTCL (188 aa)) is polygalacturonic acid-binding. The 48-residue stretch at 234–281 (GNQTCEQVGSTSICGGNSTCLDSTPRNGYICRCNEGFDGNPYLSAGCQ) folds into the EGF-like 1 domain. 6 disulfides stabilise this stretch: cysteine 238/cysteine 253, cysteine 247/cysteine 264, cysteine 266/cysteine 280, cysteine 286/cysteine 303, cysteine 297/cysteine 312, and cysteine 314/cysteine 327. Residues 282 to 328 (DVNECTTSSTIHRHNCSDPKTCRNKVGGFYCKCQSGYRLDTTTMSCK) enclose the EGF-like 2; calcium-binding domain. The N-linked (GlcNAc...) asparagine glycan is linked to asparagine 296. A helical transmembrane segment spans residues 332–352 (FAWTTILLVTTIGFLVILLGV). The Cytoplasmic segment spans residues 353–735 (ACIQQRMKHL…VAILDIETGR (383 aa)). Threonine 398 is modified (phosphothreonine). In terms of domain architecture, Protein kinase spans 409–692 (YAESRILGQG…RVEKTKHKWS (284 aa)). Residues 415-423 (LGQGGQGTV) and lysine 437 contribute to the ATP site. The residue at position 482 (tyrosine 482) is a Phosphotyrosine. Catalysis depends on aspartate 534, which acts as the Proton acceptor. Phosphothreonine is present on residues threonine 568 and threonine 573. Tyrosine 581 is modified (phosphotyrosine).

Belongs to the protein kinase superfamily. Ser/Thr protein kinase family. In terms of assembly, interacts with the glycine-rich proteins GRP3 and GRP3S, and the type 2C protein phosphatase KAPP. Component of a 500 kDa complex, composed of WAK1, GRP3 and KAPP. Interacts with the oxygen-evolving enhancer protein 2 (OEE2). Predominantly expressed in green tissues such as stems and leaves. Detected at organ junctions.

It localises to the membrane. The enzyme catalyses L-seryl-[protein] + ATP = O-phospho-L-seryl-[protein] + ADP + H(+). It carries out the reaction L-threonyl-[protein] + ATP = O-phospho-L-threonyl-[protein] + ADP + H(+). Functionally, serine/threonine-protein kinase that may function as a signaling receptor of extracellular matrix component. Binding to pectin may have significance in the control of cell expansion, morphogenesis and development. Required during plant's response to pathogen infection and in plant defense against heavy metal toxicity. Phosphorylates the oxygen-evolving enhancer protein 2 (OEE2) in an GRP-3-dependent manner. In Arabidopsis thaliana (Mouse-ear cress), this protein is Wall-associated receptor kinase 1 (WAK1).